The primary structure comprises 277 residues: Outer membrane lipoprotein 1 (277 aa).

A signal peptide spans M1–A19. C20 is lipidated: N-palmitoyl cysteine. Residue C20 is the site of S-diacylglycerol cysteine attachment.

It belongs to the NlpA lipoprotein family.

The protein resides in the cell outer membrane. The sequence is that of Outer membrane lipoprotein 1 (plpA) from Mannheimia haemolytica (Pasteurella haemolytica).